The following is a 270-amino-acid chain: tRNA pseudouridine synthase A (270 aa).

Catalysis depends on aspartate 60, which acts as the Nucleophile. Tyrosine 118 lines the substrate pocket.

It belongs to the tRNA pseudouridine synthase TruA family. Homodimer.

The enzyme catalyses uridine(38/39/40) in tRNA = pseudouridine(38/39/40) in tRNA. In terms of biological role, formation of pseudouridine at positions 38, 39 and 40 in the anticodon stem and loop of transfer RNAs. This chain is tRNA pseudouridine synthase A, found in Salmonella typhimurium (strain LT2 / SGSC1412 / ATCC 700720).